A 228-amino-acid chain; its full sequence is Cytidylate kinase (228 aa).

Position 12-20 (12-20 (GPSGSGKGT)) interacts with ATP.

This sequence belongs to the cytidylate kinase family. Type 1 subfamily.

It is found in the cytoplasm. It carries out the reaction CMP + ATP = CDP + ADP. It catalyses the reaction dCMP + ATP = dCDP + ADP. This is Cytidylate kinase from Pseudomonas putida (strain ATCC 47054 / DSM 6125 / CFBP 8728 / NCIMB 11950 / KT2440).